Consider the following 862-residue polypeptide: MTDTQQKIKAVLLTVLMVTSVFAATIAFSGAAAASERGAGDSYTTGPTDGNQDNVDSAGNVGAGAVVFQGEDDIEGEFADGNGDTVGIGELQKVSGDNEGILLESPIPQDQPTGRYTANPGVEGTEGVTLQTPRITDLEIQNSDEGDVTGSILQANNDNTAEILVDYNYDEAEDLELTVEDEDGLEVTEEILADGASETVNTNVNNDDHPNPAADGDRDDSFDAGFTINPSNVDEGEYTITVEGVEDLDFGDASETATVEITTDQTASLSLDSDEVTQGEDLGFDIENSPEGNFHAVVIEESEFRDSASASNYAKVFRNVGDTSDRGLVGEDADGNTVAVAPGDADSLESIDYAYGIVEIDGGTGVGSVETQYLDDSSIDIDLYEAANGDYTDNNAHVNDINLVTDDTYETDDEQDFDVLEGDLTIDSPSGTYVTGSEVDVNGTASEGIDDVAIYARDNNDYELVEIDSEETISVDGDDTFSEEDISLSGGDLGGNDILGLPGTYRIGVVDVEDADSNSNGTVDDSLTTSEFNSGVSSAESLRVTDTELNGTFITYNGQISSDDNQIDVEGQAPGKDNLVIAFVDSRGNAVATDISVDDDDTFSEDDISISALSEGTVTAHIISSGRDNLFGDGVSDSSSGFASLIEEEYASGSSTGDQVRSRILENSVDDTASDDLIVNEQFRLADGLTTVESVNSPVEANGTIEIEGTTNRKPDDNTITVELLDDEDESVTVDSTDEWSSDGQWSVSLDLSDENVEPGNFTVEADDGDNTDRQSVQIVEAGSLEEEQPATDTPEPDTDTPEPATDTPEPATDTPEPDTDTPEPDTETEEATTEATGPGFTAAIALIALVAAALLAVRRDN.

The N-terminal stretch at 1 to 34 is a signal peptide; the sequence is MTDTQQKIKAVLLTVLMVTSVFAATIAFSGAAAA. Disordered regions lie at residues 35–60, 101–126, and 200–220; these read SERG…SAGN, ILLE…EGTE, and VNTN…DRDD. Residues 43–57 show a composition bias toward polar residues; sequence YTTGPTDGNQDNVDS. Residues 206-220 show a composition bias toward basic and acidic residues; that stretch reads NDDHPNPAADGDRDD. Residues Asn442, Asn520, Asn550, Asn702, and Asn761 are each glycosylated (N-linked (GlcNAc...) asparagine). The tract at residues 752–838 is disordered; that stretch reads LSDENVEPGN…TEEATTEATG (87 aa). Positions 784 to 801 are enriched in acidic residues; sequence SLEEEQPATDTPEPDTDT. Positions 802–815 are enriched in low complexity; the sequence is PEPATDTPEPATDT. Over residues 816–833 the composition is skewed to acidic residues; the sequence is PEPDTDTPEPDTETEEAT. The helical transmembrane segment at 838 to 858 threads the bilayer; sequence GPGFTAAIALIALVAAALLAV. Residues 839–841 carry the PGF sorting signal motif; sequence PGF.

It belongs to the halobacterial S-layer protein family. Post-translationally, glycosylated. Cleaved by the archaeosortase ArtA at the C-terminus, with removal of a short hydrophobic segment. In terms of processing, lipidation.

Its subcellular location is the secreted. The protein localises to the cell wall. It is found in the S-layer. The protein resides in the cell membrane. In terms of biological role, S-layer protein. The S-layer is a paracrystalline mono-layered assembly of proteins which coat the surface of the cell. The chain is Cell surface glycoprotein from Haloarcula japonica (strain ATCC 49778 / DSM 6131 / JCM 7785 / NBRC 101032 / NCIMB 13157 / TR-1).